The primary structure comprises 174 residues: MGKNVVVLGTQWGDEGKGKIVDLLTDQAAAVVRYQGGHNAGHTLVIDGEKTVLHLIPSGILRENVQCLIGNGVVVAPDALLREITKLEEKGVPVRERLRISPSCTLILPYHVALDQAREASRSEGKIGTTGRGIGPAYEDKVARRGLRIGDLFNPERFAVKLRELLEYHNFALQ.

GTP contacts are provided by residues 13-19 (GDEGKGK) and 41-43 (GHT). The active-site Proton acceptor is Asp-14. Positions 14 and 41 each coordinate Mg(2+). IMP contacts are provided by residues 14-17 (DEGK), 39-42 (NAGH), Thr-130, and Arg-144. His-42 acts as the Proton donor in catalysis.

The protein belongs to the adenylosuccinate synthetase family. In terms of assembly, homodimer. Mg(2+) serves as cofactor.

Its subcellular location is the cytoplasm. It carries out the reaction IMP + L-aspartate + GTP = N(6)-(1,2-dicarboxyethyl)-AMP + GDP + phosphate + 2 H(+). Its pathway is purine metabolism; AMP biosynthesis via de novo pathway; AMP from IMP: step 1/2. In terms of biological role, plays an important role in the de novo pathway of purine nucleotide biosynthesis. Catalyzes the first committed step in the biosynthesis of AMP from IMP. The sequence is that of Adenylosuccinate synthetase from Stutzerimonas stutzeri (Pseudomonas stutzeri).